The primary structure comprises 156 residues: MPRKGPAPKRPLVSDPVYGSPLVTQLINKVLVDGKKSTAERIVYGALEGARAKSGGDPVAALKKAMDNVKPSLEVRSRRVGGATYQVPVEVKPGRSTALALRWLVGYSKARREKTMTERLQNEILDASNGLGAAVKRREDTHKMAESNKAFAHYRW.

It belongs to the universal ribosomal protein uS7 family. In terms of assembly, part of the 30S ribosomal subunit. Contacts proteins S9 and S11.

In terms of biological role, one of the primary rRNA binding proteins, it binds directly to 16S rRNA where it nucleates assembly of the head domain of the 30S subunit. Is located at the subunit interface close to the decoding center, probably blocks exit of the E-site tRNA. This is Small ribosomal subunit protein uS7 from Paenarthrobacter aurescens (strain TC1).